The primary structure comprises 259 residues: uncharacterized protein (259 aa).

A divalent metal cation-binding residues include H9, H11, E97, H133, H157, and D207.

This sequence belongs to the metallo-dependent hydrolases superfamily. TatD-type hydrolase family. A divalent metal cation is required as a cofactor.

This is an uncharacterized protein from Escherichia coli (strain K12).